The chain runs to 228 residues: UPF0173 metal-dependent hydrolase lin1612 (228 aa).

Belongs to the UPF0173 family.

This is UPF0173 metal-dependent hydrolase lin1612 from Listeria innocua serovar 6a (strain ATCC BAA-680 / CLIP 11262).